Here is a 582-residue protein sequence, read N- to C-terminus: MVQESRPGSVRSYSVGYQARSRSSSQRRHSLTRQRSSQRLIRTISIESDVSNITDDDDLRAVNEGVAGVQLDVSETANKGPRRASATDVTDSLGSTSSEYIEIPFVKETLDASLPSDYLKQDILNLIQSLKISKWYNNKKIQPVAQDMNLVKISGAMTNAIFKVEYPKLPSLLLRIYGPNIDNIIDREYELQILARLSLKNIGPSLYGCFVNGRFEQFLENSKTLTKDDIRNWKNSQRIARRMKELHVGVPLLSSERKNGSACWQKINQWLRTIEKVDQWVGDPKNIENSLLCENWSKFMDIVDRYHKWLISQEQGIEQVNKNLIFCHNDAQYGNLLFTAPVMNTPSLYTAPSSTSLTSQSSSLFPSSSNVIVDDIINPPKQEQSQDSKLVVIDFEYAGANPAAYDLANHLSEWMYDYNNAKAPHQCHADRYPDKEQVLNFLYSYVSHLRGGAKEPIDEEVQRLYKSIIQWRPTVQLFWSLWAILQSGKLEKKEASTAITREEIGPNGKKYIIKTEPESPEEDFVENDDEPEAGVSIDTFDYMAYGRDKIAVFWGDLIGLGIITEEECKNFSSFKFLDTSYL.

The interval M1–S36 is disordered. S30 bears the Phosphoserine; by PKA mark. S48 and S51 each carry phosphoserine. A Phosphothreonine modification is found at T54. At S85 the chain carries Phosphoserine; by PKA.

It belongs to the choline/ethanolamine kinase family. As to quaternary structure, monomer. Interacts with NAP1. Mg(2+) is required as a cofactor.

It is found in the cytoplasm. It catalyses the reaction choline + ATP = phosphocholine + ADP + H(+). It carries out the reaction ethanolamine + ATP = phosphoethanolamine + ADP + H(+). It participates in phospholipid metabolism; phosphatidylcholine biosynthesis; phosphocholine from choline: step 1/1. Functionally, catalyzes the committed step in the synthesis of phosphatidylcholine by the CDP-choline pathway. Also exhibits ethanolamine kinase activity but it is a poor substrate at 14% efficiency compared with choline. The protein is Choline kinase of Saccharomyces cerevisiae (strain ATCC 204508 / S288c) (Baker's yeast).